Here is a 138-residue protein sequence, read N- to C-terminus: MRILCLDIGSRRIGVAISDPLKIAAQPFCVLDLQKEDLYSCLDKIFNEHQIEKIVIGYPVSKFHPDKATEKLQKIDEICSELERRYKVGIIKWDERFSTKAVERILREENVSWQKRKKVVDKLAAVYILQGYLDFINS.

Belongs to the YqgF nuclease family.

The protein resides in the cytoplasm. In terms of biological role, could be a nuclease involved in processing of the 5'-end of pre-16S rRNA. This chain is Putative pre-16S rRNA nuclease, found in Caldicellulosiruptor saccharolyticus (strain ATCC 43494 / DSM 8903 / Tp8T 6331).